We begin with the raw amino-acid sequence, 635 residues long: Threonine--tRNA ligase (635 aa).

The region spanning methionine 1–aspartate 61 is the TGS domain. A catalytic region spans residues aspartate 242–proline 532. Cysteine 333, histidine 384, and histidine 509 together coordinate Zn(2+).

It belongs to the class-II aminoacyl-tRNA synthetase family. Homodimer. Requires Zn(2+) as cofactor.

It is found in the cytoplasm. It carries out the reaction tRNA(Thr) + L-threonine + ATP = L-threonyl-tRNA(Thr) + AMP + diphosphate + H(+). Catalyzes the attachment of threonine to tRNA(Thr) in a two-step reaction: L-threonine is first activated by ATP to form Thr-AMP and then transferred to the acceptor end of tRNA(Thr). Also edits incorrectly charged L-seryl-tRNA(Thr). The sequence is that of Threonine--tRNA ligase from Syntrophomonas wolfei subsp. wolfei (strain DSM 2245B / Goettingen).